A 379-amino-acid chain; its full sequence is UPF0450 protein C17orf58 homolog (379 aa).

A signal peptide spans 1-17 (MIPALTVPLLFLCATSA). Disordered stretches follow at residues 76–95 (RTRATHPQRQGQDLALPDKT) and 162–194 (TASQNLQGRKYSRNNDYGSMDHESNRPGKMNPH). Over residues 180–194 (SMDHESNRPGKMNPH) the composition is skewed to basic and acidic residues. 3 disulfide bridges follow: Cys234–Cys308, Cys238–Cys312, and Cys249–Cys378. Positions 234 to 378 (CIAECHRDKD…KVLAAAHSKC (145 aa)) constitute an NTR domain.

This sequence belongs to the UPF0450 family.

This is UPF0450 protein C17orf58 homolog from Xenopus laevis (African clawed frog).